The chain runs to 195 residues: Probable prefoldin subunit 3 (195 aa).

The protein belongs to the prefoldin subunit alpha family. In terms of assembly, heterohexamer of two PFD-alpha type and four PFD-beta type subunits.

Its function is as follows. Binds specifically to cytosolic chaperonin (c-CPN) and transfers target proteins to it. Binds to nascent polypeptide chain and promotes folding in an environment in which there are many competing pathways for nonnative proteins. The chain is Probable prefoldin subunit 3 (pfdn3) from Dictyostelium discoideum (Social amoeba).